The sequence spans 397 residues: Tyrosine--tRNA ligase (397 aa).

The 'HIGH' region signature appears at 39-48; sequence PTAPDLHLGH. Positions 223 to 227 match the 'KMSKS' region motif; that stretch reads KMSKS. An ATP-binding site is contributed by Lys226. The S4 RNA-binding domain maps to 334–395; that stretch reads YPIANLVHDL…GKRKFAKIRL (62 aa).

It belongs to the class-I aminoacyl-tRNA synthetase family. TyrS type 2 subfamily. As to quaternary structure, homodimer.

It localises to the cytoplasm. It carries out the reaction tRNA(Tyr) + L-tyrosine + ATP = L-tyrosyl-tRNA(Tyr) + AMP + diphosphate + H(+). Catalyzes the attachment of tyrosine to tRNA(Tyr) in a two-step reaction: tyrosine is first activated by ATP to form Tyr-AMP and then transferred to the acceptor end of tRNA(Tyr). This chain is Tyrosine--tRNA ligase, found in Methylococcus capsulatus (strain ATCC 33009 / NCIMB 11132 / Bath).